The following is a 95-amino-acid chain: Co-chaperonin GroES (95 aa).

The segment covering 12–22 has biased composition (basic and acidic residues); that stretch reads VKPSPAEEKTK. Residues 12-38 are disordered; that stretch reads VKPSPAEEKTKGGLYIPDSGKEKPQHG.

This sequence belongs to the GroES chaperonin family. As to quaternary structure, heptamer of 7 subunits arranged in a ring. Interacts with the chaperonin GroEL.

It localises to the cytoplasm. Together with the chaperonin GroEL, plays an essential role in assisting protein folding. The GroEL-GroES system forms a nano-cage that allows encapsulation of the non-native substrate proteins and provides a physical environment optimized to promote and accelerate protein folding. GroES binds to the apical surface of the GroEL ring, thereby capping the opening of the GroEL channel. This is Co-chaperonin GroES from Chloroherpeton thalassium (strain ATCC 35110 / GB-78).